Here is a 600-residue protein sequence, read N- to C-terminus: ATP-dependent RNA helicase DDX55 (600 aa).

The Q motif motif lies at 9-37 (WESLPVPLHPQVLGALRELGFPYMTPVQS). A Helicase ATP-binding domain is found at 40–223 (IPLFMRNKDV…RAGLRNPVRV (184 aa)). Position 53–60 (53–60 (AVTGSGKT)) interacts with ATP. The short motif at 171–174 (DEAD) is the DEAD box element. Residues 254–402 (KFNQLVHFLR…EMKPQRNTAD (149 aa)) enclose the Helicase C-terminal domain. Residues 500 to 513 (EQQRREKTENEGRR) show a composition bias toward basic and acidic residues. Residues 500-550 (EQQRREKTENEGRRKFIKNKAWSKQKAKKEKKKKMNEKRKREEGSDIEDED) form a disordered region. Residues 514 to 537 (KFIKNKAWSKQKAKKEKKKKMNEK) show a composition bias toward basic residues. Residues 533-562 (KMNEKRKREEGSDIEDEDMEELLNDTRLLK) are important for nuclear localization. Ser-544 and Ser-594 each carry phosphoserine.

It belongs to the DEAD box helicase family. DDX55/SPB4 subfamily. As to quaternary structure, interacts with 28S rRNA. Interacts with double-stranded RNA substrates in vitro; the interaction stimulates ATPase activity.

It localises to the nucleus. The protein resides in the nucleoplasm. It carries out the reaction ATP + H2O = ADP + phosphate + H(+). Its function is as follows. Probable ATP-binding RNA helicase. Has ATPase activity and is involved in the maturation of precursor large subunit rRNAs. This is ATP-dependent RNA helicase DDX55 from Homo sapiens (Human).